We begin with the raw amino-acid sequence, 396 residues long: MADLAENVSLPLSQESFEDLWKMNLNLVAVQPPETESWVGYDNFMMEAPLQVEFDPSLFEVSATEPAPQPSISTLDTGSPPTSTVPTTSDYPGALGFQLRFLQSSTAKSVTCTYSPDLNKLFCQLAKTCPVQIVVDHPPPPGAVVRALAIYKKLSDVADVVRRCPHHQSTSENNEGPAPRGHLVRVEGNQRSEYMEDGNTLRHSVLVPYEPPQVGSECTTVLYNFMCNSSCMGGMNRRPILTIITLETQEGQLLGRRSFEVRVCACPGRDRKTEEINLKKQQETTLETKTKPAQGIKRAMKEASLPAPQPGASKKTKSSPAVSDDEIYTLQIRGKEKYEMLKKFNDSLELSELVPVADADKYRQKCLTKRVAKRDFGVGPKKRKKLLVKEEKSDSD.

Residues 1–44 (MADLAENVSLPLSQESFEDLWKMNLNLVAVQPPETESWVGYDNF) form a transcription activation (acidic) region. A disordered region spans residues 63–89 (ATEPAPQPSISTLDTGSPPTSTVPTTS). Residues 77–89 (TGSPPTSTVPTTS) show a composition bias toward low complexity. The DNA-binding element occupies 90-281 (DYPGALGFQL…KTEEINLKKQ (192 aa)). Zn(2+) is bound by residues Cys-164, His-167, Cys-227, and Cys-231. The interaction with DNA stretch occupies residues 262-269 (RVCACPGR). The short motif at 297 to 317 (KRAMKEASLPAPQPGASKKTK) is the Bipartite nuclear localization signal element. The tract at residues 301-322 (KEASLPAPQPGASKKTKSSPAV) is disordered. Positions 325-356 (DEIYTLQIRGKEKYEMLKKFNDSLELSELVPV) are oligomerization. Positions 339 to 350 (EMLKKFNDSLEL) match the Nuclear export signal motif. Residues 369-392 (KRVAKRDFGVGPKKRKKLLVKEEK) form a basic (repression of DNA-binding) region.

The protein belongs to the p53 family. As to quaternary structure, binds DNA as a homotetramer. Zn(2+) serves as cofactor.

Its subcellular location is the cytoplasm. The protein localises to the nucleus. Multifunctional transcription factor that induces cell cycle arrest, DNA repair or apoptosis upon binding to its target DNA sequence. Acts as a tumor suppressor in many tumor types; induces growth arrest or apoptosis depending on the physiological circumstances and cell type. Negatively regulates cell division by controlling expression of a set of genes required for this process. One of the activated genes is an inhibitor of cyclin-dependent kinases. Apoptosis induction seems to be mediated either by stimulation of BAX and FAS antigen expression, or by repression of Bcl-2 expression. The polypeptide is Cellular tumor antigen p53 (tp53) (Oncorhynchus mykiss (Rainbow trout)).